The chain runs to 428 residues: 26S proteasome regulatory subunit 7 (428 aa).

Position 211 to 218 (211 to 218 (GPPGTGKT)) interacts with ATP.

The protein belongs to the AAA ATPase family.

Its subcellular location is the cytoplasm. It is found in the nucleus. In terms of biological role, the 26S proteasome is involved in the ATP-dependent degradation of ubiquitinated proteins. The regulatory (or ATPase) complex confers ATP dependency and substrate specificity to the 26S complex. The protein is 26S proteasome regulatory subunit 7 (psmC2) of Dictyostelium discoideum (Social amoeba).